A 456-amino-acid polypeptide reads, in one-letter code: DEAD-box ATP-dependent RNA helicase 10 (456 aa).

Residues 9-37 carry the Q motif motif; sequence KTFAELGVREELVKACERLGWKNPSKIQA. A Helicase ATP-binding domain is found at 40 to 223; it reads LPFALEGKDV…RACLRNPVKI (184 aa). 53 to 60 is an ATP binding site; the sequence is AQTGSGKT. The DEAD box signature appears at 171–174; it reads DEAD. Positions 250 to 394 constitute a Helicase C-terminal domain; that stretch reads YLVYILSEMP…EYPAEEDEVL (145 aa). The segment at 407-456 is disordered; it reads SAMNMKESGGRKRRGEDDEESERFLGGNKDRGNKERGGNKDKKSSKKFKR. The span at 434-448 shows a compositional bias: basic and acidic residues; that stretch reads NKDRGNKERGGNKDK.

The protein belongs to the DEAD box helicase family. DDX47/RRP3 subfamily. Expressed in all tissues and organs examined including root, cotyledon, first and second leaves, third and fourth leaves, fifth and sixth leaves, shoot apex, flower, flower bud, cauline leaf and rosette leaves.

Its subcellular location is the nucleus. The protein resides in the nucleolus. It catalyses the reaction ATP + H2O = ADP + phosphate + H(+). Functionally, involved in leaf polarity establishment by functioning cooperatively with AS2 to repress abaxial genes ARF3, ARF4, KAN1, KAN2, YAB1 and YAB5, and the knox homeobox genes KNAT1, KNAT2, KNAT6, and STM to promote adaxial development in leaf primordia at shoot apical meristems at high temperatures. Involved in the processing of pre-rRNA intermediates at high temperatures. The chain is DEAD-box ATP-dependent RNA helicase 10 (RH10) from Arabidopsis thaliana (Mouse-ear cress).